Consider the following 357-residue polypeptide: Molybdenum import ATP-binding protein ModC (357 aa).

An ABC transporter domain is found at 1–233 (MRLEVEARLR…PFPTSGPGRR (233 aa)). 31–38 (GRSGSGKT) contributes to the ATP binding site. The Mop domain maps to 293 to 357 (GISALNVLPG…AVVKTVALDY (65 aa)).

This sequence belongs to the ABC transporter superfamily. Molybdate importer (TC 3.A.1.8) family. The complex is composed of two ATP-binding proteins (ModC), two transmembrane proteins (ModB) and a solute-binding protein (ModA).

The protein localises to the cell inner membrane. The enzyme catalyses molybdate(out) + ATP + H2O = molybdate(in) + ADP + phosphate + H(+). Its function is as follows. Part of the ABC transporter complex ModABC involved in molybdenum import. Responsible for energy coupling to the transport system. In Rhizobium meliloti (strain 1021) (Ensifer meliloti), this protein is Molybdenum import ATP-binding protein ModC.